Consider the following 124-residue polypeptide: Orexigenic neuropeptide QRFP (124 aa).

Residues 1 to 17 (MRCLCSWLCLLLPLSAC) form the signal peptide. The propeptide occupies 18–79 (FPLLDRRGPT…REHTGFRLGR (62 aa)). Residues 63–100 (KEQQASRREHTGFRLGRQDSGSEATGFLPTDSEKASGP) form a disordered region. The residue at position 80 (glutamine 80) is a Pyrrolidone carboxylic acid. Phenylalanine 122 is subject to Phenylalanine amide.

The protein belongs to the RFamide neuropeptide family. Ligand for the G-protein coupled receptor QRFPR/GPR103. Expressed in the brain with highest expression levels in the hypothalamus and optic nerve. Also expressed in the trachea and mammary gland.

The protein resides in the secreted. Functionally, stimulates feeding and grooming behavior, metabolic rate and locomotor activity and increases blood pressure. May have orexigenic activity. May promote aldosterone secretion by the adrenal gland. The polypeptide is Orexigenic neuropeptide QRFP (Qrfp) (Rattus norvegicus (Rat)).